The sequence spans 291 residues: 4-hydroxy-tetrahydrodipicolinate synthase (291 aa).

A pyruvate-binding site is contributed by Thr44. Tyr132 serves as the catalytic Proton donor/acceptor. The Schiff-base intermediate with substrate role is filled by Lys160. Ile202 provides a ligand contact to pyruvate.

The protein belongs to the DapA family. Homotetramer; dimer of dimers.

It is found in the cytoplasm. It catalyses the reaction L-aspartate 4-semialdehyde + pyruvate = (2S,4S)-4-hydroxy-2,3,4,5-tetrahydrodipicolinate + H2O + H(+). It participates in amino-acid biosynthesis; L-lysine biosynthesis via DAP pathway; (S)-tetrahydrodipicolinate from L-aspartate: step 3/4. Its function is as follows. Catalyzes the condensation of (S)-aspartate-beta-semialdehyde [(S)-ASA] and pyruvate to 4-hydroxy-tetrahydrodipicolinate (HTPA). This Thermodesulfovibrio yellowstonii (strain ATCC 51303 / DSM 11347 / YP87) protein is 4-hydroxy-tetrahydrodipicolinate synthase.